The primary structure comprises 162 residues: NADH-quinone oxidoreductase subunit I 1 (162 aa).

4Fe-4S ferredoxin-type domains follow at residues 52-82 (LRRY…IEAG) and 93-122 (VRYD…EGPN). The [4Fe-4S] cluster site is built by C62, C65, C68, C72, C102, C105, C108, and C112.

This sequence belongs to the complex I 23 kDa subunit family. NDH-1 is composed of 14 different subunits. Subunits NuoA, H, J, K, L, M, N constitute the membrane sector of the complex. The cofactor is [4Fe-4S] cluster.

It localises to the cell inner membrane. The enzyme catalyses a quinone + NADH + 5 H(+)(in) = a quinol + NAD(+) + 4 H(+)(out). Its function is as follows. NDH-1 shuttles electrons from NADH, via FMN and iron-sulfur (Fe-S) centers, to quinones in the respiratory chain. The immediate electron acceptor for the enzyme in this species is believed to be ubiquinone. Couples the redox reaction to proton translocation (for every two electrons transferred, four hydrogen ions are translocated across the cytoplasmic membrane), and thus conserves the redox energy in a proton gradient. This chain is NADH-quinone oxidoreductase subunit I 1, found in Rhodopseudomonas palustris (strain ATCC BAA-98 / CGA009).